The primary structure comprises 459 residues: Exodeoxyribonuclease 7 large subunit (459 aa).

This sequence belongs to the XseA family. As to quaternary structure, heterooligomer composed of large and small subunits.

It localises to the cytoplasm. It catalyses the reaction Exonucleolytic cleavage in either 5'- to 3'- or 3'- to 5'-direction to yield nucleoside 5'-phosphates.. Bidirectionally degrades single-stranded DNA into large acid-insoluble oligonucleotides, which are then degraded further into small acid-soluble oligonucleotides. In Pseudomonas fluorescens (strain ATCC BAA-477 / NRRL B-23932 / Pf-5), this protein is Exodeoxyribonuclease 7 large subunit.